We begin with the raw amino-acid sequence, 370 residues long: Histidinol-phosphate aminotransferase 2 (370 aa).

N6-(pyridoxal phosphate)lysine is present on K230.

Belongs to the class-II pyridoxal-phosphate-dependent aminotransferase family. Histidinol-phosphate aminotransferase subfamily. As to quaternary structure, homodimer. Pyridoxal 5'-phosphate is required as a cofactor.

The enzyme catalyses L-histidinol phosphate + 2-oxoglutarate = 3-(imidazol-4-yl)-2-oxopropyl phosphate + L-glutamate. It functions in the pathway amino-acid biosynthesis; L-histidine biosynthesis; L-histidine from 5-phospho-alpha-D-ribose 1-diphosphate: step 7/9. This Pseudomonas fluorescens (strain ATCC BAA-477 / NRRL B-23932 / Pf-5) protein is Histidinol-phosphate aminotransferase 2.